Here is a 65-residue protein sequence, read N- to C-terminus: Large ribosomal subunit protein bL32 (65 aa).

It belongs to the bacterial ribosomal protein bL32 family.

This chain is Large ribosomal subunit protein bL32, found in Tropheryma whipplei (strain TW08/27) (Whipple's bacillus).